The sequence spans 194 residues: Potassium-transporting ATPase KdpC subunit (194 aa).

The chain crosses the membrane as a helical span at residues 12-34 (LFLLLLTGGVYPLLTTALGQWWF).

The protein belongs to the KdpC family. In terms of assembly, the system is composed of three essential subunits: KdpA, KdpB and KdpC.

The protein resides in the cell inner membrane. Its function is as follows. Part of the high-affinity ATP-driven potassium transport (or Kdp) system, which catalyzes the hydrolysis of ATP coupled with the electrogenic transport of potassium into the cytoplasm. This subunit acts as a catalytic chaperone that increases the ATP-binding affinity of the ATP-hydrolyzing subunit KdpB by the formation of a transient KdpB/KdpC/ATP ternary complex. In Salmonella choleraesuis (strain SC-B67), this protein is Potassium-transporting ATPase KdpC subunit.